A 226-amino-acid chain; its full sequence is Ribose-5-phosphate isomerase A (226 aa).

Residues 28–31, 84–87, and 97–100 contribute to the substrate site; these read TGST, DGAD, and KGLG. Residue Glu106 is the Proton acceptor of the active site. Lys124 contacts substrate.

Belongs to the ribose 5-phosphate isomerase family. In terms of assembly, homodimer.

The catalysed reaction is aldehydo-D-ribose 5-phosphate = D-ribulose 5-phosphate. Its pathway is carbohydrate degradation; pentose phosphate pathway; D-ribose 5-phosphate from D-ribulose 5-phosphate (non-oxidative stage): step 1/1. In terms of biological role, catalyzes the reversible conversion of ribose-5-phosphate to ribulose 5-phosphate. The polypeptide is Ribose-5-phosphate isomerase A (Deinococcus radiodurans (strain ATCC 13939 / DSM 20539 / JCM 16871 / CCUG 27074 / LMG 4051 / NBRC 15346 / NCIMB 9279 / VKM B-1422 / R1)).